A 508-amino-acid polypeptide reads, in one-letter code: Photosystem II CP47 reaction center protein (508 aa).

The next 6 helical transmembrane spans lie at 21 to 36, 101 to 115, 140 to 156, 203 to 218, 237 to 252, and 457 to 472; these read SVHL…WAGS, IVLS…IWHW, GIHL…FGAF, IAAG…FHLS, VLSS…AFVV, and TFAL…HGAR.

The protein belongs to the PsbB/PsbC family. PsbB subfamily. In terms of assembly, PSII is composed of 1 copy each of membrane proteins PsbA, PsbB, PsbC, PsbD, PsbE, PsbF, PsbH, PsbI, PsbJ, PsbK, PsbL, PsbM, PsbT, PsbX, PsbY, PsbZ, Psb30/Ycf12, at least 3 peripheral proteins of the oxygen-evolving complex and a large number of cofactors. It forms dimeric complexes. Requires Binds multiple chlorophylls. PSII binds additional chlorophylls, carotenoids and specific lipids. as cofactor.

The protein resides in the plastid. It is found in the chloroplast thylakoid membrane. Its function is as follows. One of the components of the core complex of photosystem II (PSII). It binds chlorophyll and helps catalyze the primary light-induced photochemical processes of PSII. PSII is a light-driven water:plastoquinone oxidoreductase, using light energy to abstract electrons from H(2)O, generating O(2) and a proton gradient subsequently used for ATP formation. The sequence is that of Photosystem II CP47 reaction center protein from Angiopteris evecta (Mule's foot fern).